Here is a 1261-residue protein sequence, read N- to C-terminus: Myosin-1 (1261 aa).

Positions 1-39 (MGHSRRPVGGEKKSRGFGRSKVADVGDGRQAGKPQVKKA) are disordered. The region spanning 49 to 728 (IGVSDLTLLS…TLFALEAMRD (680 aa)) is the Myosin motor domain. 142-149 (GESGAGKT) contacts ATP. Residue serine 370 is modified to Phosphoserine. The segment at 417-499 (SIGILDIYGF…PGVFAALNDA (83 aa)) is actin-binding. IQ domains lie at 732–752 (HNMA…RIEC) and 753–778 (AIRI…QGHQ). The TH1 domain occupies 786 to 973 (RRRMSLLGSR…KSHTIHTSPG (188 aa)). Disordered regions lie at residues 956-1093 (ASPN…KALY) and 1139-1261 (YLEE…DDEW). 4 stretches are compositionally biased toward pro residues: residues 1019 to 1029 (RPTPKPQPLPQ), 1038 to 1052 (IPAP…PVPQ), 1072 to 1084 (APPP…PPAP), and 1147 to 1159 (TPKP…PPAA). The SH3 domain occupies 1084 to 1145 (PKKATAKALY…PQAYLEEQVA (62 aa)). Low complexity predominate over residues 1160-1181 (PRASPVPSANGAAATAAAAKAK). Residues 1212 to 1233 (VSMNSQDSSGGSGRGTPNSTSN) show a composition bias toward polar residues. The span at 1234–1243 (ASLAGGLAEA) shows a compositional bias: low complexity.

Belongs to the TRAFAC class myosin-kinesin ATPase superfamily. Myosin family. Post-translationally, phosphorylation of the TEDS site (Ser-370) is required for the polarization of the actin cytoskeleton. Phosphorylation probably activates the myosin-I ATPase activity.

It is found in the cytoplasm. The protein resides in the cytoskeleton. The protein localises to the actin patch. In terms of biological role, type-I myosin implicated in the organization of the actin cytoskeleton. Required for proper actin cytoskeleton polarization. At the cell cortex, assembles in patch-like structures together with proteins from the actin-polymerizing machinery and promotes actin assembly. Functions as actin nucleation-promoting factor (NPF) for the Arp2/3 complex. Plays an important role in polarized growth, spore germination, hyphal morphogenesis, and septal wall formation. The chain is Myosin-1 (myoA) from Aspergillus oryzae (strain ATCC 42149 / RIB 40) (Yellow koji mold).